A 273-amino-acid polypeptide reads, in one-letter code: NH(3)-dependent NAD(+) synthetase (273 aa).

47–54 (GISGGQDS) lines the ATP pocket. Asp53 provides a ligand contact to Mg(2+). Residue Arg139 participates in deamido-NAD(+) binding. Residue Thr159 coordinates ATP. Glu164 is a Mg(2+) binding site. The deamido-NAD(+) site is built by Lys172 and Asp179. Lys188 and Thr210 together coordinate ATP. Deamido-NAD(+) is bound at residue 259–260 (HK).

This sequence belongs to the NAD synthetase family. As to quaternary structure, homodimer.

It catalyses the reaction deamido-NAD(+) + NH4(+) + ATP = AMP + diphosphate + NAD(+) + H(+). It functions in the pathway cofactor biosynthesis; NAD(+) biosynthesis; NAD(+) from deamido-NAD(+) (ammonia route): step 1/1. Its function is as follows. Catalyzes the ATP-dependent amidation of deamido-NAD to form NAD. Uses ammonia as a nitrogen source. This chain is NH(3)-dependent NAD(+) synthetase, found in Staphylococcus aureus (strain MRSA252).